The sequence spans 1374 residues: Mitogen-activated protein kinase kinase kinase 5 (1374 aa).

Positions 68–87 (PAATSSSSATRGRGSSVGGG) are disordered. Low complexity predominate over residues 69 to 81 (AATSSSSATRGRG). Asymmetric dimethylarginine; by PRMT1 occurs at positions 78 and 80. At Ser-83 the chain carries Phosphoserine; by PIM1 and PKB/AKT1. The interval 649 to 1374 (MVNTITEEKG…AIIDFRNKQT (726 aa)) is interaction with PPIA/CYPA. The Protein kinase domain occupies 680–938 (NGDRVVLGKG…ANDLLVDEFL (259 aa)). Residues 686–694 (LGKGTYGIV) and Lys-709 contribute to the ATP site. The residue at position 718 (Tyr-718) is a Phosphotyrosine. Residue Asp-803 is the Proton acceptor of the active site. Thr-813 is modified (phosphothreonine; by autocatalysis). Thr-838 is modified (phosphothreonine; by autocatalysis, MELK and MAP3K6). Thr-842 bears the Phosphothreonine; by autocatalysis mark. Residue Ser-958 is modified to Phosphoserine. A Phosphoserine; by autocatalysis modification is found at Ser-966. Residues Ser-1029 and Ser-1033 each carry the phosphoserine modification. The tract at residues 1182–1209 (SESDTADQEDLDVEDDHEEQPSNQTVRR) is disordered. A compositionally biased stretch (acidic residues) spans 1185–1199 (DTADQEDLDVEDDHE). A coiled-coil region spans residues 1245–1285 (LGRMKIETNRLLEELVRKEKELQALLHRAIEEKDQEIKHLK).

Belongs to the protein kinase superfamily. STE Ser/Thr protein kinase family. MAP kinase kinase kinase subfamily. As to quaternary structure, homodimer when inactive. Binds both upstream activators and downstream substrates in multimolecular complexes. Part of a cytoplasmic complex made of HIPK1, DAB2IP and MAP3K5 in response to TNF. This complex formation promotes MAP3K5-JNK activation and subsequent apoptosis. Interacts with SOCS1 which recognizes phosphorylation of Tyr-718 and induces MAP3K5/ASK1 degradation in endothelial cells. Interacts with the 14-3-3 family proteins such as YWHAB, YWHAE, YWHAQ, YWHAH, YWHAZ and SFN. Interacts with ARRB2, BIRC2, DAB2IP, IGF1R, MAP3K6/ASK2, PGAM5, PIM1, PPP5C, SOCS1, STUB1, TRAF2, TRAF6 and TXN. Interacts with ERN1 in a TRAF2-dependent manner. Interacts with calcineurin subunit PPP3R1. Interacts with PPM1L. Interacts (via N-terminus) with RAF1 and this interaction inhibits the proapoptotic function of MAP3K5. Interacts with DAB2IP (via N-terminus C2 domain); the interaction occurs in a TNF-alpha-dependent manner. Interacts with DUSP13A; may positively regulate apoptosis. Interacts with DAXX. Interacts with RC3H2. Interacts with PPIA/CYPA. Interacts with PRMT1; the interaction results in MAP3K5 methylation by PRMT1 which inhibits MAP3K5 activation. Interacts with TRAF2; the interaction is inhibited by PRMT1. Interacts with TRIM48. (Microbial infection) Interacts with HIV-1 Nef; this interaction inhibits MAP3K5 signaling. It depends on Mg(2+) as a cofactor. Post-translationally, phosphorylated at Thr-838 through autophosphorylation and by MAP3K6/ASK2 which leads to activation. Thr-838 is dephosphorylated by PPP5C. Ser-83 and Ser-1033 are inactivating phosphorylation sites, the former of which is phosphorylated by AKT1. Phosphorylated at Ser-966 which induces association of MAP3K5/ASK1 with the 14-3-3 family proteins and suppresses MAP3K5/ASK1 activity. Calcineurin (CN) dephosphorylates this site. Also dephosphorylated and activated by PGAM5. Phosphorylation at Ser-966 in response to oxidative stress is negatively regulated by PPIA/CYPA. Ubiquitinated. Tumor necrosis factor (TNF) induces TNFR2-dependent ubiquitination, leading to proteasomal degradation. Ubiquitinated by RC3H2 in a TRIM48-dependent manner. In terms of processing, methylation at Arg-78 and Arg-80 by PRMT1 promotes association of MAP3K5 with thioredoxin and negatively regulates MAP3K5 association with TRAF2, inhibiting MAP3K5 activation. Methylation is blocked by ubiquitination of PRMT1 by TRIM48. Abundantly expressed in heart and pancreas.

The protein localises to the cytoplasm. It localises to the endoplasmic reticulum. The catalysed reaction is L-seryl-[protein] + ATP = O-phospho-L-seryl-[protein] + ADP + H(+). The enzyme catalyses L-threonyl-[protein] + ATP = O-phospho-L-threonyl-[protein] + ADP + H(+). Its activity is regulated as follows. Activated by various stressors, including oxidative stress, endoplasmic reticulum stress, and calcium overload, as well as by receptor-mediated inflammatory signals, such as the tumor necrosis factor (TNF) and lipopolysaccharide (LPS). Homophilic association of MAP3K5/ASK1 through the C-terminal coiled-coil domains and the heteromeric complex formation of MAP3K5/ASK1 with the reduced form of thioredoxin (TXN), constitutes an inactive form of the kinase. Upon ROS-induced dissociation of TXN from MAP3K5/ASK1, TRAF2 and TRAF6 are reciprocally recruited to MAP3K5/ASK1 and form the active MAP3K5/ASK1 signalosome, in which TRAF2 and TRAF6 appear to facilitate the active configuration of MAP3K5/ASK1. MAP3K5/ASK1 activity is also regulated through several phosphorylation and dephosphorylation events. Thr-838 is an activating phosphorylation site that is autophosphorylated and phosphorylated by MAP3K6/ASK2 and dephosphorylated by PPP5C. Ser-83 and Ser-1033 are inactivating phosphorylation sites, the former of which is phosphorylated by AKT1. Phosphorylation of Ser-966 induces association of MAP3K5/ASK1 with the 14-3-3 family proteins, which suppresses MAP3K5/ASK1 activity. Calcium/calmodulin-activated protein phosphatase calcineurin (PPP3CA) has been shown to directly dephosphorylate this site. SOCS1 binds to ASK1 by recognizing phosphorylation of Tyr-718 and induces MAP3K5/ASK1 degradation in endothelial cells. Also dephosphorylated and activated by PGAM5. Contains an N-terminal autoinhibitory domain. Once activated targeted for proteasomal degradation by RC3H2-mediated ubiquitination. Serine/threonine kinase which acts as an essential component of the MAP kinase signal transduction pathway. Plays an important role in the cascades of cellular responses evoked by changes in the environment. Mediates signaling for determination of cell fate such as differentiation and survival. Plays a crucial role in the apoptosis signal transduction pathway through mitochondria-dependent caspase activation. MAP3K5/ASK1 is required for the innate immune response, which is essential for host defense against a wide range of pathogens. Mediates signal transduction of various stressors like oxidative stress as well as by receptor-mediated inflammatory signals, such as the tumor necrosis factor (TNF) or lipopolysaccharide (LPS). Once activated, acts as an upstream activator of the MKK/JNK signal transduction cascade and the p38 MAPK signal transduction cascade through the phosphorylation and activation of several MAP kinase kinases like MAP2K4/SEK1, MAP2K3/MKK3, MAP2K6/MKK6 and MAP2K7/MKK7. These MAP2Ks in turn activate p38 MAPKs and c-jun N-terminal kinases (JNKs). Both p38 MAPK and JNKs control the transcription factors activator protein-1 (AP-1). The polypeptide is Mitogen-activated protein kinase kinase kinase 5 (MAP3K5) (Homo sapiens (Human)).